The chain runs to 596 residues: MNENIEKKLSILPQQPGCYLMKDKNGTVIYVGKSKKLRNRVRSYFRGANDRKTQRLVQEIRDFEYMVTSSEIEALILEMNLIKKYDPRYNVMLKDDKSYPYLKITSERHPRLIVTRRLKKDKGKYFGPYPNVIAARETKKLLDRMYPLRKCNNPSGRPCLYYHMGQCKACAENPPSVKEYQEIVQEISSFLQGGFKDIRKNLAGEMQKASEALNFERAKEIRDTIQHIDATMEQQKMTLTDQMDRDIFGYSYDKGWMCVQVFFIRQGKLIERDTSVFPFFDSPEETIVSFIGRFYLHENHLKPKQVLVPVGIDNELLAKVLEIQVHIPLRGRKKELVQLAVKNAEISLNEKFQLIEKDEERTIQAIEDLGEQLNIETPHRIEAFDNSNIQGTDPVSAMIVFEDGKPNKKEYRKYKIRDVKGPDDYDTMREVVRRRYSRVLKENLPLPDLIIVDGGKGQMSAALEVLEDELGLDIPLAGLAKDDRHKTSELLYGMPPIVVPLERQSQAFYLVQRIQDEVHRFAITFHRQLRGKSLFQSELDKIPGVGEKRRKLLLSHFKSINQIKKASIEDMRKLGIPSNIAELVLNHLNSPNDDET.

Residues 14–91 form the GIY-YIG domain; sequence QQPGCYLMKD…IKKYDPRYNV (78 aa). Residues 196 to 231 enclose the UVR domain; sequence KDIRKNLAGEMQKASEALNFERAKEIRDTIQHIDAT.

Belongs to the UvrC family. As to quaternary structure, interacts with UvrB in an incision complex.

It is found in the cytoplasm. Functionally, the UvrABC repair system catalyzes the recognition and processing of DNA lesions. UvrC both incises the 5' and 3' sides of the lesion. The N-terminal half is responsible for the 3' incision and the C-terminal half is responsible for the 5' incision. The protein is UvrABC system protein C of Oceanobacillus iheyensis (strain DSM 14371 / CIP 107618 / JCM 11309 / KCTC 3954 / HTE831).